Reading from the N-terminus, the 380-residue chain is MVQPRPAAPTVKFVDEYCQWYKSLFPDVRSFEAFKYLHVGCISDLKRKTLPEIAKIVGLDNQQGLHHFLTTSPWDIEKLRTLRLELILQVLKGRPIILIIDETGDKKKGSKTDYVKRQYIGNLGKTDNGIVAVTVYGVFCGMTFPLLFEVYKPRERLQAGDKYRTKPEIAAILIKKLQSMGFKFNLVLADSLYGESGKNFISVLDELNLNYIVAIRSNHYVEILPRQHIQYLKWQKFQRVFSDLSRENRFIREIIPGKRGELRYWQITTDPENLPDNTTWYVMSKYPDITPREVGNFYGLRTWVEYGLKQSKNELGWSDFRLTHYPDIEAMVGNYLQCLFNGVCIRSNCFSLHHNESQNLFHILGGIMEMAGRTFLTIFV.

Its function is as follows. Involved in the transposition of the insertion sequence. The polypeptide is Probable transposase for insertion sequence element IS701 (Microchaete diplosiphon (Fremyella diplosiphon)).